Consider the following 261-residue polypeptide: Undecaprenyl-diphosphatase 2 (261 aa).

8 helical membrane passes run 1-21, 38-58, 75-95, 103-123, 138-158, 178-198, 212-232, and 240-260; these read MLEA…PISS, PGKT…CVVF, FAFA…GATL, LESP…ILVI, MSPA…VPGV, AAEF…AYSL, LIAL…KGFI, and FAPF…LILM.

It belongs to the UppP family.

Its subcellular location is the cell inner membrane. It carries out the reaction di-trans,octa-cis-undecaprenyl diphosphate + H2O = di-trans,octa-cis-undecaprenyl phosphate + phosphate + H(+). Functionally, catalyzes the dephosphorylation of undecaprenyl diphosphate (UPP). Confers resistance to bacitracin. The chain is Undecaprenyl-diphosphatase 2 from Paramagnetospirillum magneticum (strain ATCC 700264 / AMB-1) (Magnetospirillum magneticum).